We begin with the raw amino-acid sequence, 2894 residues long: uncharacterized protein (2894 aa).

Residues 8–28 traverse the membrane as a helical segment; it reads ISIFVFTILLLSNVSLGLNVS. 20 PbH1 repeats span residues 543-567, 2085-2107, 2135-2156, 2158-2180, 2201-2223, 2224-2244, 2245-2266, 2267-2289, 2290-2311, 2341-2363, 2367-2389, 2390-2419, 2422-2444, 2455-2477, 2479-2501, 2512-2542, 2550-2582, 2589-2611, 2612-2633, and 2638-2660; these read EVRWYIENNTLYFYDDPIYGYDISL, NYPLYIDNLTINASGGYGISMLN, FGNITIYNITISSCNQGLVLYK, GNGIKLINSQIKNSVYEGVYSKN, ISSILVNNSLIYKNRYEGLLLEN, SSSSILNSNIMNNSIGIYLKE, NYISKIQKSNISYNAYGIEIVN, SSNVYINSSNIFNASTDGIAIFN, GENVSVENSLLYNNNYSILSYG, LNNLKLYNSSVLNSGSYGLFIYS, ASNVNISKSLINGSYKDGIYIYG, VNAINIVNNNITNNGLIGGDPAGSGIKISG, TKGVLILNNNISHNLGNGISLEG, VENNIISNNGIEENSGNGIYIGG, VENVSIFNNTIQYSDAQAILIQE, GTNISIINNTIQYNGLTVTIGNITAGITVGA, NGYIIIEGNKIINNNLCPNPTYGGKVGGIEVYG, SLEFNISKNIIANNSAYGILIGA, SKDINIINNTIFNNEKGITIPN, and PYNIIISKNSIYNNSLLGIDLDD.

The protein localises to the membrane. This is an uncharacterized protein from Methanocaldococcus jannaschii (strain ATCC 43067 / DSM 2661 / JAL-1 / JCM 10045 / NBRC 100440) (Methanococcus jannaschii).